Reading from the N-terminus, the 607-residue chain is Leucine-rich repeat-containing protein 63 (607 aa).

LRR repeat units follow at residues Q357 to L378, N380 to L401, Y403 to L424, Y426 to L447, S449 to L470, N471 to R497, and L498 to K524.

This chain is Leucine-rich repeat-containing protein 63 (Lrrc63), found in Rattus norvegicus (Rat).